The chain runs to 334 residues: Galactinol synthase 4 (334 aa).

Lys-104 is a catalytic residue. Mn(2+) is bound by residues Asp-120, Asp-122, and His-258.

It belongs to the glycosyltransferase 8 family. Galactosyltransferase subfamily. A divalent metal cation is required as a cofactor.

The protein localises to the cytoplasm. It carries out the reaction myo-inositol + UDP-alpha-D-galactose = alpha-D-galactosyl-(1-&gt;3)-1D-myo-inositol + UDP + H(+). Galactinol synthase involved in the biosynthesis of raffinose family oligosaccharides (RFOs) that function as osmoprotectants. May promote plant stress tolerance. The protein is Galactinol synthase 4 (GOLS4) of Arabidopsis thaliana (Mouse-ear cress).